We begin with the raw amino-acid sequence, 418 residues long: Putative competence-damage inducible protein (418 aa).

It belongs to the CinA family.

The sequence is that of Putative competence-damage inducible protein from Clostridioides difficile (strain 630) (Peptoclostridium difficile).